The chain runs to 150 residues: Transcriptional repressor NrdR (150 aa).

A zinc finger spans residues 3-34 (CPFCNFSDSKVVDSRPDKGGAAIRRRRECESC). Residues 49-139 (PLVTKRDGRR…VYRSFKDINE (91 aa)) enclose the ATP-cone domain.

Belongs to the NrdR family. Zn(2+) serves as cofactor.

In terms of biological role, negatively regulates transcription of bacterial ribonucleotide reductase nrd genes and operons by binding to NrdR-boxes. The polypeptide is Transcriptional repressor NrdR (Citrifermentans bemidjiense (strain ATCC BAA-1014 / DSM 16622 / JCM 12645 / Bem) (Geobacter bemidjiensis)).